Here is a 68-residue protein sequence, read N- to C-terminus: Sec-independent protein translocase protein TatA (68 aa).

Residues 1–21 (MGSFSIWHWLIVLAVVLLLFG) traverse the membrane as a helical segment. The tract at residues 42-68 (GMGDDEVASADKSVDGKTVDHKSDEVR) is disordered. Over residues 53–68 (KSVDGKTVDHKSDEVR) the composition is skewed to basic and acidic residues.

This sequence belongs to the TatA/E family. As to quaternary structure, the Tat system comprises two distinct complexes: a TatABC complex, containing multiple copies of TatA, TatB and TatC subunits, and a separate TatA complex, containing only TatA subunits. Substrates initially bind to the TatABC complex, which probably triggers association of the separate TatA complex to form the active translocon.

It is found in the cell inner membrane. In terms of biological role, part of the twin-arginine translocation (Tat) system that transports large folded proteins containing a characteristic twin-arginine motif in their signal peptide across membranes. TatA could form the protein-conducting channel of the Tat system. This chain is Sec-independent protein translocase protein TatA, found in Rhizobium meliloti (strain 1021) (Ensifer meliloti).